Reading from the N-terminus, the 932-residue chain is RNA-binding protein 12 (932 aa).

The interval 97–116 (IPPANASRSGPPPSSGMSGR) is disordered. Low complexity predominate over residues 98–116 (PPANASRSGPPPSSGMSGR). In terms of domain architecture, RRM 1 spans 304–379 (LYVSVHGMPF…RYVEVSPATE (76 aa)). 2 positions are modified to phosphoserine: S352 and S375. Polar residues-rich tracts occupy residues 392 to 401 (KQNMGPSGQT) and 408 to 417 (LPRSKSPSGQ). Residues 392-424 (KQNMGPSGQTHPPPQTLPRSKSPSGQKRSRSRS) form a disordered region. 3 positions are modified to phosphoserine: S420, S422, and S424. Residues 430-507 (FCVYLKGLPF…RFIQVHPITK (78 aa)) form the RRM 2 domain. S525 carries the post-translational modification Phosphoserine. Over residues 717–734 (NGPPFNFPGNFGGSNAFG) the composition is skewed to low complexity. The interval 717–855 (NGPPFNFPGN…PGFASSSGKP (139 aa)) is disordered. A compositionally biased stretch (gly residues) spans 783–811 (SGFGGGPQNFGNGPGSLGGPPGFGSGPPG). The segment covering 824–838 (AFGPGPGPGPGPGPG) has biased composition (pro residues). Residues 856–932 (GPTVIKVQNM…PIGSRKVNLY (77 aa)) enclose the RRM 3 domain.

It is found in the nucleus. The sequence is that of RNA-binding protein 12 (RBM12) from Pongo abelii (Sumatran orangutan).